The chain runs to 554 residues: Perforin-1 (554 aa).

An N-terminal signal peptide occupies residues 1 to 20; sequence MATCLFLLGLFLLLPRPVPA. 3 disulfides stabilise this stretch: Cys22–Cys75, Cys30–Cys72, and Cys101–Cys175. Positions 26–374 constitute an MACPF domain; sequence TRSECKQKHK…HYIMSRARWQ (349 aa). The beta stranded transmembrane segment at 128–148 threads the bilayer; that stretch reads WRVGLDVNPRPEANMRASVAG. Asn204 carries N-linked (GlcNAc...) asparagine glycosylation. 4 disulfides stabilise this stretch: Cys241–Cys407, Cys376–Cys392, Cys380–Cys394, and Cys396–Cys406. The chain crosses the membrane as a beta stranded span at residues 256–278; the sequence is CLNVEAQVSIGAQASVSSEYKAC. A glycan (N-linked (GlcNAc...) asparagine) is linked at Asn375. The 33-residue stretch at 375–407 folds into the EGF-like domain; that stretch reads NCSRPCRSGQHKSSHDSCQCECQDSKVTNQDCC. The 119-residue stretch at 395–513 folds into the C2 domain; the sequence is ECQDSKVTNQ…FHEVTCELNH (119 aa). Ca(2+) is bound by residues Gly428, Asp429, Thr432, Ala433, Asp435, Asn454, Glu467, Asp483, Ala484, Asp485, Trp488, Asp489, Asp490, and Asp491. 2 disulfide bridges follow: Cys496–Cys509 and Cys524–Cys533. Residue Asn548 is glycosylated (N-linked (GlcNAc...) asparagine).

It belongs to the complement C6/C7/C8/C9 family. As to quaternary structure, monomer, as soluble protein. Homooligomer; homooligomerizes to form a pore-forming ring. Ca(2+) is required as a cofactor. In terms of processing, N-glycosylated. The glycosylation sites are facing the interior of the pore. Detected in cytotoxic T-lymphocytes and natural killer cells.

The protein resides in the cytolytic granule. The protein localises to the secreted. It localises to the cell membrane. Its subcellular location is the endosome lumen. Its function is as follows. Pore-forming protein that plays a key role in granzyme-mediated programmed cell death, and in defense against virus-infected or neoplastic cells. Can insert into the membrane of target cells in its calcium-bound form, oligomerize and form large pores. Promotes cytolysis and apoptosis of target cells by mediating the passage and uptake of cytotoxic granzymes. Facilitates the delivery of cationic cargo protein, while anionic or neural proteins are not delivered efficiently. Perforin pores allow the release of mature caspase-7 (CASP7) into the extracellular milieu. The polypeptide is Perforin-1 (Prf1) (Mus musculus (Mouse)).